The following is a 139-amino-acid chain: Small ribosomal subunit protein uS12 (139 aa).

At aspartate 102 the chain carries 3-methylthioaspartic acid. The segment at 116–139 is disordered; it reads DTTGVAKRSQGRSKYGAKRPKKSK. The span at 124 to 139 shows a compositional bias: basic residues; the sequence is SQGRSKYGAKRPKKSK.

The protein belongs to the universal ribosomal protein uS12 family. In terms of assembly, part of the 30S ribosomal subunit. Contacts proteins S8 and S17. May interact with IF1 in the 30S initiation complex.

Functionally, with S4 and S5 plays an important role in translational accuracy. Its function is as follows. Interacts with and stabilizes bases of the 16S rRNA that are involved in tRNA selection in the A site and with the mRNA backbone. Located at the interface of the 30S and 50S subunits, it traverses the body of the 30S subunit contacting proteins on the other side and probably holding the rRNA structure together. The combined cluster of proteins S8, S12 and S17 appears to hold together the shoulder and platform of the 30S subunit. In Mesomycoplasma hyopneumoniae (strain 7448) (Mycoplasma hyopneumoniae), this protein is Small ribosomal subunit protein uS12.